Consider the following 347-residue polypeptide: N-acetyl-gamma-glutamyl-phosphate reductase (347 aa).

Residue Cys-152 is part of the active site.

The protein belongs to the NAGSA dehydrogenase family. Type 1 subfamily.

Its subcellular location is the cytoplasm. It carries out the reaction N-acetyl-L-glutamate 5-semialdehyde + phosphate + NADP(+) = N-acetyl-L-glutamyl 5-phosphate + NADPH + H(+). It participates in amino-acid biosynthesis; L-arginine biosynthesis; N(2)-acetyl-L-ornithine from L-glutamate: step 3/4. Catalyzes the NADPH-dependent reduction of N-acetyl-5-glutamyl phosphate to yield N-acetyl-L-glutamate 5-semialdehyde. The sequence is that of N-acetyl-gamma-glutamyl-phosphate reductase from Neisseria meningitidis serogroup C (strain 053442).